A 558-amino-acid chain; its full sequence is Glucose-6-phosphate isomerase (558 aa).

Ala2 is subject to N-acetylalanine. N6-acetyllysine is present on Lys12. The residue at position 34 (Lys34) is an N6-(2-hydroxyisobutyryl)lysine. The residue at position 107 (Ser107) is a Phosphoserine. Thr109 carries the phosphothreonine modification. N6-acetyllysine is present on Lys142. D-glucose 6-phosphate is bound at residue 159–160; sequence GS. Ser185 bears the Phosphoserine; by CK2 mark. 210–215 is a binding site for D-glucose 6-phosphate; sequence SKTFTT. A Phosphothreonine modification is found at Thr250. 3 residues coordinate D-glucose 6-phosphate: Gln354, Glu358, and His389. Glu358 functions as the Proton donor in the catalytic mechanism. His389 is a catalytic residue. Position 454 is an N6-acetyllysine; alternate (Lys454). Residue Lys454 is modified to N6-malonyllysine; alternate. Lys454 carries the N6-succinyllysine; alternate modification. Ser455 bears the Phosphoserine mark. Residue Lys519 participates in D-glucose 6-phosphate binding. Lys519 is an active-site residue.

This sequence belongs to the GPI family. In terms of assembly, homodimer; in the catalytically active form. Monomer in the secreted form. Phosphorylation at Ser-185 by CK2 has been shown to decrease enzymatic activity and may contribute to secretion by a non-classical secretory pathway. Post-translationally, ISGylated.

It localises to the cytoplasm. It is found in the secreted. The enzyme catalyses alpha-D-glucose 6-phosphate = beta-D-fructose 6-phosphate. Its pathway is carbohydrate degradation; glycolysis; D-glyceraldehyde 3-phosphate and glycerone phosphate from D-glucose: step 2/4. In the cytoplasm, catalyzes the conversion of glucose-6-phosphate to fructose-6-phosphate, the second step in glycolysis, and the reverse reaction during gluconeogenesis. Besides it's role as a glycolytic enzyme, also acts as a secreted cytokine: acts as an angiogenic factor (AMF) that stimulates endothelial cell motility. Acts as a neurotrophic factor, neuroleukin, for spinal and sensory neurons. It is secreted by lectin-stimulated T-cells and induces immunoglobulin secretion. In Pongo abelii (Sumatran orangutan), this protein is Glucose-6-phosphate isomerase.